Consider the following 159-residue polypeptide: Crossover junction endodeoxyribonuclease RuvC (159 aa).

Residues aspartate 7, glutamate 67, and aspartate 139 contribute to the active site. Residues aspartate 7, glutamate 67, and aspartate 139 each contribute to the Mg(2+) site.

This sequence belongs to the RuvC family. As to quaternary structure, homodimer which binds Holliday junction (HJ) DNA. The HJ becomes 2-fold symmetrical on binding to RuvC with unstacked arms; it has a different conformation from HJ DNA in complex with RuvA. In the full resolvosome a probable DNA-RuvA(4)-RuvB(12)-RuvC(2) complex forms which resolves the HJ. The cofactor is Mg(2+).

It localises to the cytoplasm. The enzyme catalyses Endonucleolytic cleavage at a junction such as a reciprocal single-stranded crossover between two homologous DNA duplexes (Holliday junction).. In terms of biological role, the RuvA-RuvB-RuvC complex processes Holliday junction (HJ) DNA during genetic recombination and DNA repair. Endonuclease that resolves HJ intermediates. Cleaves cruciform DNA by making single-stranded nicks across the HJ at symmetrical positions within the homologous arms, yielding a 5'-phosphate and a 3'-hydroxyl group; requires a central core of homology in the junction. The consensus cleavage sequence is 5'-(A/T)TT(C/G)-3'. Cleavage occurs on the 3'-side of the TT dinucleotide at the point of strand exchange. HJ branch migration catalyzed by RuvA-RuvB allows RuvC to scan DNA until it finds its consensus sequence, where it cleaves and resolves the cruciform DNA. This chain is Crossover junction endodeoxyribonuclease RuvC, found in Thermosynechococcus vestitus (strain NIES-2133 / IAM M-273 / BP-1).